Here is a 445-residue protein sequence, read N- to C-terminus: Flagellum-associated coiled-coil domain-containing protein 1 (445 aa).

A disordered region spans residues 26 to 47 (PQLPRKNSTGSSKLTPLVPAPK). Polar residues predominate over residues 30 to 39 (RKNSTGSSKL). Coiled-coil stretches lie at residues 122 to 226 (SRTN…TYQD) and 283 to 315 (AVFENFIQEKEELLKQHQSDTLQLEELRKTKEV). K376 carries the post-translational modification N6-acetyllysine. The stretch at 387–414 (EKYKHTIQILTEENIHLKQKIISKNEEI) forms a coiled coil.

The protein resides in the cytoplasm. Its subcellular location is the cytoplasmic granule. It localises to the cell projection. The protein localises to the cilium. It is found in the flagellum. This chain is Flagellum-associated coiled-coil domain-containing protein 1, found in Homo sapiens (Human).